We begin with the raw amino-acid sequence, 267 residues long: 5'-nucleotidase SurE (267 aa).

4 residues coordinate a divalent metal cation: D9, D10, S40, and N97.

This sequence belongs to the SurE nucleotidase family. A divalent metal cation serves as cofactor.

It localises to the cytoplasm. It catalyses the reaction a ribonucleoside 5'-phosphate + H2O = a ribonucleoside + phosphate. In terms of biological role, nucleotidase that shows phosphatase activity on nucleoside 5'-monophosphates. The polypeptide is 5'-nucleotidase SurE (Helicobacter pylori (strain HPAG1)).